Reading from the N-terminus, the 242-residue chain is 7-cyano-7-deazaguanine synthase (242 aa).

Residues 1 to 22 (MNSSSNEKNKDLNRKNFSSKTD) are disordered. 32–42 (LSGGLDSTTCL) contacts ATP. 4 residues coordinate Zn(2+): Cys-212, Cys-221, Cys-224, and Cys-227.

The protein belongs to the QueC family. Zn(2+) is required as a cofactor.

It carries out the reaction 7-carboxy-7-deazaguanine + NH4(+) + ATP = 7-cyano-7-deazaguanine + ADP + phosphate + H2O + H(+). It participates in purine metabolism; 7-cyano-7-deazaguanine biosynthesis. In terms of biological role, catalyzes the ATP-dependent conversion of 7-carboxy-7-deazaguanine (CDG) to 7-cyano-7-deazaguanine (preQ(0)). The polypeptide is 7-cyano-7-deazaguanine synthase (Leptospira interrogans serogroup Icterohaemorrhagiae serovar copenhageni (strain Fiocruz L1-130)).